A 444-amino-acid polypeptide reads, in one-letter code: Maltoporin (444 aa).

Positions 1-24 (MITLRKVPLALAIAAGILSAQAGA) are cleaved as a signal peptide.

This sequence belongs to the porin LamB (TC 1.B.3) family. In terms of assembly, homotrimer formed of three 18-stranded antiparallel beta-barrels, containing three independent channels.

It is found in the cell outer membrane. The catalysed reaction is beta-maltose(in) = beta-maltose(out). Involved in the transport of maltose and maltodextrins. In Enterobacter sp. (strain 638), this protein is Maltoporin.